Consider the following 535-residue polypeptide: Potassium channel subfamily K member 10 (535 aa).

The Cytoplasmic segment spans residues 1 to 68 (MYFSYIGYFF…GLQTVMKWKT (68 aa)). Residues 69–89 (VVAIFVVVVVYLVTGGLVFRA) form a helical membrane-spanning segment. Positions 151–177 (LGSAFFFAGTVITTIGYGNIAPSTEGG) form an intramembrane region, pore-forming. Residues T164, I165, G166, and Y167 each contribute to the K(+) site. The tract at residues 164 to 169 (TIGYGN) is selectivity filter 1. The chain crosses the membrane as a helical span at residues 179–199 (IFCILYAIFGIPLFGFLLAGI). At 200-230 (GDQLGTIFGKSIARVEKVFRKKQVSQTKIRV) the chain is on the cytoplasmic side. A helical transmembrane segment spans residues 231–251 (ISTILFILAGCIVFVTIPAVI). The segment at residues 260–291 (ALESIYFVVVTLTTVGFGDFVAGGNAGINYRE) is an intramembrane region (pore-forming). Positions 273, 274, 275, and 276 each coordinate K(+). The interval 273–278 (TVGFGD) is selectivity filter 2. Residues 296–316 (LVWFWILVGLAYFAAVLSMIG) traverse the membrane as a helical segment. Topologically, residues 317–535 (DWLRVLSKKT…ENNSLLEDRN (219 aa)) are cytoplasmic. Disordered stretches follow at residues 410–438 (QESINNRPNNLRLKGPEQLTKHGQGASED) and 510–535 (EMENGMVPTDTKDQGLENNSLLEDRN). The segment covering 525–535 (LENNSLLEDRN) has biased composition (polar residues).

As to quaternary structure, homodimer; disulfide-linked. Forms heterodimers with other 2-pore domain K(+) channel subunits, such as KCNK2, KCNK4 and KCNK18. Detected in dorsal root ganglia (DRG) neurons (at protein level).

It localises to the cell membrane. It catalyses the reaction K(+)(in) = K(+)(out). It carries out the reaction Rb(+)(in) = Rb(+)(out). The enzyme catalyses Cs(+)(in) = Cs(+)(out). Its activity is regulated as follows. Activated by stimuli such as mechanical stretch, acidic pH and polyunsaturated free fatty acids. Activated by a dihydroacridine analog, ML67-33. Inhibited by polycationic dye ruthenium red. Selectively activated by T2A3 (2-[(4-chloro-3-methylphenyl)amino] benzoic acid). Functionally, k(+) channel that conducts voltage-dependent outward rectifying currents upon membrane depolarization. Voltage sensing is coupled to K(+) electrochemical gradient in an 'ion flux gating' mode where outward but not inward ion flow opens the gate. Converts to voltage-independent 'leak' conductance mode upon stimulation by various stimuli including mechanical membrane stretch, acidic pH, heat and lipids. Homo- and heterodimerizes to form functional channels with distinct regulatory and gating properties. In trigeminal ganglia sensory neurons, the heterodimer of KCNK10/TREK-2 and KCNK18/TRESK inhibits neuronal firing and neurogenic inflammation by stabilizing the resting membrane potential at K(+) equilibrium potential as well as by regulating the threshold of action potentials and the spike frequency. Permeable to other monovalent ions such as Rb(+) and Cs(+). This chain is Potassium channel subfamily K member 10, found in Mus musculus (Mouse).